The following is a 91-amino-acid chain: Small ribosomal subunit protein uS19 (91 aa).

Belongs to the universal ribosomal protein uS19 family.

Protein S19 forms a complex with S13 that binds strongly to the 16S ribosomal RNA. The chain is Small ribosomal subunit protein uS19 from Actinobacillus pleuropneumoniae serotype 7 (strain AP76).